The chain runs to 243 residues: Adenosylcobinamide-GDP ribazoletransferase (243 aa).

Helical transmembrane passes span 31–51 (LLFYPLVGLLFGVILWALNIA), 57–77 (LLLHAALLLAVWVLLSGALHL), 109–129 (IAVVTLVLVLLLKFAALLALI), 135–155 (MALIIVPLIGRAALLGLFLTT), and 188–208 (LVIAGFNAVVALLLAVIVFIW).

Belongs to the CobS family. It depends on Mg(2+) as a cofactor.

It localises to the cell inner membrane. The enzyme catalyses alpha-ribazole + adenosylcob(III)inamide-GDP = adenosylcob(III)alamin + GMP + H(+). The catalysed reaction is alpha-ribazole 5'-phosphate + adenosylcob(III)inamide-GDP = adenosylcob(III)alamin 5'-phosphate + GMP + H(+). Its pathway is cofactor biosynthesis; adenosylcobalamin biosynthesis; adenosylcobalamin from cob(II)yrinate a,c-diamide: step 7/7. In terms of biological role, joins adenosylcobinamide-GDP and alpha-ribazole to generate adenosylcobalamin (Ado-cobalamin). Also synthesizes adenosylcobalamin 5'-phosphate from adenosylcobinamide-GDP and alpha-ribazole 5'-phosphate. This is Adenosylcobinamide-GDP ribazoletransferase from Pseudomonas fluorescens (strain Pf0-1).